A 69-amino-acid chain; its full sequence is Large ribosomal subunit protein bL31 (69 aa).

Zn(2+)-binding residues include C16, C18, C36, and C39.

This sequence belongs to the bacterial ribosomal protein bL31 family. Type A subfamily. In terms of assembly, part of the 50S ribosomal subunit. Zn(2+) is required as a cofactor.

Functionally, binds the 23S rRNA. The sequence is that of Large ribosomal subunit protein bL31 from Ruminiclostridium cellulolyticum (strain ATCC 35319 / DSM 5812 / JCM 6584 / H10) (Clostridium cellulolyticum).